The following is a 340-amino-acid chain: N-acetyl-gamma-glutamyl-phosphate reductase (340 aa).

The active site involves C151.

The protein belongs to the NAGSA dehydrogenase family. Type 1 subfamily.

The protein resides in the cytoplasm. It carries out the reaction N-acetyl-L-glutamate 5-semialdehyde + phosphate + NADP(+) = N-acetyl-L-glutamyl 5-phosphate + NADPH + H(+). Its pathway is amino-acid biosynthesis; L-arginine biosynthesis; N(2)-acetyl-L-ornithine from L-glutamate: step 3/4. Catalyzes the NADPH-dependent reduction of N-acetyl-5-glutamyl phosphate to yield N-acetyl-L-glutamate 5-semialdehyde. This Aquifex aeolicus (strain VF5) protein is N-acetyl-gamma-glutamyl-phosphate reductase.